The sequence spans 580 residues: uncharacterized protein (580 aa).

Disordered stretches follow at residues 161–241, 256–281, 325–345, 472–495, and 544–564; these read SFSP…SVND, LGSL…SFSD, NVSH…QLLK, PRDT…DNSD, and SAVL…KEVR. Residues 192 to 203 are compositionally biased toward low complexity; it reads SNSNSSDTSTDD. Composition is skewed to polar residues over residues 223-241 and 256-269; these read THSS…SVND and LGSL…TAQK. Residues 326-341 are compositionally biased toward basic and acidic residues; the sequence is VSHEEKSHSVQDDKSK. Polar residues predominate over residues 481 to 495; that stretch reads PNLSQSGNINSDNSD.

This is an uncharacterized protein from Schizosaccharomyces pombe (strain 972 / ATCC 24843) (Fission yeast).